The following is a 414-amino-acid chain: tRNA dimethylallyltransferase (414 aa).

33–40 (APTASGKT) provides a ligand contact to ATP. 35-40 (TASGKT) is a substrate binding site. Interaction with substrate tRNA stretches follow at residues 58 to 61 (DSAL), 182 to 186 (QRITR), and 266 to 271 (RCVGYR).

This sequence belongs to the IPP transferase family. In terms of assembly, monomer. The cofactor is Mg(2+).

It carries out the reaction adenosine(37) in tRNA + dimethylallyl diphosphate = N(6)-dimethylallyladenosine(37) in tRNA + diphosphate. Functionally, catalyzes the transfer of a dimethylallyl group onto the adenine at position 37 in tRNAs that read codons beginning with uridine, leading to the formation of N6-(dimethylallyl)adenosine (i(6)A). This chain is tRNA dimethylallyltransferase, found in Psychrobacter cryohalolentis (strain ATCC BAA-1226 / DSM 17306 / VKM B-2378 / K5).